A 165-amino-acid chain; its full sequence is Chorismate pyruvate-lyase (165 aa).

Substrate contacts are provided by methionine 35, arginine 77, leucine 115, and glutamate 156.

It belongs to the UbiC family. Monomer.

It localises to the cytoplasm. It carries out the reaction chorismate = 4-hydroxybenzoate + pyruvate. It functions in the pathway cofactor biosynthesis; ubiquinone biosynthesis. Removes the pyruvyl group from chorismate, with concomitant aromatization of the ring, to provide 4-hydroxybenzoate (4HB) for the ubiquinone pathway. This chain is Chorismate pyruvate-lyase, found in Escherichia coli O17:K52:H18 (strain UMN026 / ExPEC).